The sequence spans 333 residues: Taste receptor type 2 member 110 (333 aa).

Over 1–13 (MFSQIISTSDIFT) the chain is Extracellular. A helical membrane pass occupies residues 14–34 (FTIILFVELVIGILGNGFIAL). Residues 35–60 (VNIMDWTKRRSISSADQILTALAITR) are Cytoplasmic-facing. A helical membrane pass occupies residues 61 to 81 (FLYVWFMIICILLFMLCPHLL). Over 82–89 (TRSEIVTS) the chain is Extracellular. A helical transmembrane segment spans residues 90–110 (IGIIWIVNNHFSVWLATCLGV). Residues 111–133 (FYFLKIANFSNSLFLYLKWRVKK) are Cytoplasmic-facing. The chain crosses the membrane as a helical span at residues 134–154 (VVLMIIQVSMIFLILNLLSLS). The Extracellular portion of the chain corresponds to 155–205 (MYDQFSIDVYEGNTSYNLGDSTPFPTISLFINSSKVFVITNSSHIFLPINS). Asn-186 and Asn-195 each carry an N-linked (GlcNAc...) asparagine glycan. The chain crosses the membrane as a helical span at residues 206-226 (LFMLIPFTVSLVAFLMLIFSL). The Cytoplasmic portion of the chain corresponds to 227-255 (WKHHKKMQVNAKPPRDASTMAHIKALQTG). Residues 256–276 (FSFLLLYAVYLLFIVIGMLSL) traverse the membrane as a helical segment. Residues 277 to 283 (RLIGGKL) lie on the Extracellular side of the membrane. A helical transmembrane segment spans residues 284–304 (ILLFDHISGIGFPISHSFVLI). The Cytoplasmic segment spans residues 305 to 333 (LGNNKLRQASLSVLHCLRCRSKDMDTMGP).

Belongs to the G-protein coupled receptor T2R family.

The protein localises to the membrane. Gustducin-coupled receptor implicated in the perception of bitter compounds in the oral cavity and the gastrointestinal tract. Signals through PLCB2 and the calcium-regulated cation channel TRPM5. In Mus musculus (Mouse), this protein is Taste receptor type 2 member 110.